The sequence spans 429 residues: Glutamate-1-semialdehyde 2,1-aminomutase 2 (429 aa).

Position 268 is an N6-(pyridoxal phosphate)lysine (lysine 268).

It belongs to the class-III pyridoxal-phosphate-dependent aminotransferase family. HemL subfamily. Homodimer. The cofactor is pyridoxal 5'-phosphate.

It localises to the cytoplasm. It catalyses the reaction (S)-4-amino-5-oxopentanoate = 5-aminolevulinate. The protein operates within porphyrin-containing compound metabolism; protoporphyrin-IX biosynthesis; 5-aminolevulinate from L-glutamyl-tRNA(Glu): step 2/2. The sequence is that of Glutamate-1-semialdehyde 2,1-aminomutase 2 from Geobacillus kaustophilus (strain HTA426).